Here is a 345-residue protein sequence, read N- to C-terminus: Linoleate 10R-lipoxygenase COP4 (345 aa).

Mg(2+)-binding residues include aspartate 87, aspartate 91, asparagine 222, serine 226, and glutamate 230. The DDXXD motif signature appears at 87–91 (DEISD).

Belongs to the terpene synthase family. It depends on Mg(2+) as a cofactor.

It carries out the reaction (2E,6E)-farnesyl diphosphate + H2O = cubebol + diphosphate. It catalyses the reaction (2E,6E)-farnesyl diphosphate = beta-copaene + diphosphate. The catalysed reaction is (2E,6E)-farnesyl diphosphate = beta-cubebene + diphosphate. The enzyme catalyses (2E,6E)-farnesyl diphosphate = (+)-sativene + diphosphate. Functionally, sesquiterpene synthase that catalyzes the cyclization of farnesyl diphosphate (FPP) into multiple products, including germacrene D, beta-copaene, beta-cubebene, (+)-sativene and cubebol, a natural sesquiterpene alcohol used in the food industry for its cooling and refreshing taste. Terpenoid hydrocarbons resulting from cyclization of farnesyl diphosphate are intermediates in the biosynthesis of biologically active compounds such as antibiotics, toxins and pheromones. This is Linoleate 10R-lipoxygenase COP4 (COP4) from Coprinopsis cinerea (strain Okayama-7 / 130 / ATCC MYA-4618 / FGSC 9003) (Inky cap fungus).